Reading from the N-terminus, the 451-residue chain is NADH-quinone oxidoreductase subunit H (451 aa).

9 consecutive transmembrane segments (helical) span residues 30 to 50, 98 to 118, 138 to 158, 176 to 196, 213 to 233, 262 to 282, 302 to 322, 336 to 356, and 368 to 388; these read LIIV…LFMI, AVFI…FAVI, LPVA…GIVL, AAQV…VFLY, WGIL…VGET, LFYL…TTLF, WWPV…FIWL, QFGW…EAAI, and VIPF…ADLV.

The protein belongs to the complex I subunit 1 family. In terms of assembly, NDH-1 is composed of 14 different subunits. Subunits NuoA, H, J, K, L, M, N constitute the membrane sector of the complex.

Its subcellular location is the cell membrane. It carries out the reaction a quinone + NADH + 5 H(+)(in) = a quinol + NAD(+) + 4 H(+)(out). Its function is as follows. NDH-1 shuttles electrons from NADH, via FMN and iron-sulfur (Fe-S) centers, to quinones in the respiratory chain. The immediate electron acceptor for the enzyme in this species is believed to be ubiquinone. Couples the redox reaction to proton translocation (for every two electrons transferred, four hydrogen ions are translocated across the cytoplasmic membrane), and thus conserves the redox energy in a proton gradient. This subunit may bind ubiquinone. This Acidothermus cellulolyticus (strain ATCC 43068 / DSM 8971 / 11B) protein is NADH-quinone oxidoreductase subunit H.